The sequence spans 286 residues: 4-diphosphocytidyl-2-C-methyl-D-erythritol kinase (286 aa).

The active site involves Lys-10. 100 to 110 (PMGSGLGGGSS) provides a ligand contact to ATP. Asp-142 is a catalytic residue.

It belongs to the GHMP kinase family. IspE subfamily. Homodimer.

It catalyses the reaction 4-CDP-2-C-methyl-D-erythritol + ATP = 4-CDP-2-C-methyl-D-erythritol 2-phosphate + ADP + H(+). It participates in isoprenoid biosynthesis; isopentenyl diphosphate biosynthesis via DXP pathway; isopentenyl diphosphate from 1-deoxy-D-xylulose 5-phosphate: step 3/6. Its function is as follows. Catalyzes the phosphorylation of the position 2 hydroxy group of 4-diphosphocytidyl-2C-methyl-D-erythritol. In Buchnera aphidicola subsp. Acyrthosiphon pisum (strain APS) (Acyrthosiphon pisum symbiotic bacterium), this protein is 4-diphosphocytidyl-2-C-methyl-D-erythritol kinase.